We begin with the raw amino-acid sequence, 439 residues long: ATP-dependent protease ATPase subunit HslU (439 aa).

Residues I17, 59 to 64 (GVGKTE), D251, E317, and R389 contribute to the ATP site.

Belongs to the ClpX chaperone family. HslU subfamily. A double ring-shaped homohexamer of HslV is capped on each side by a ring-shaped HslU homohexamer. The assembly of the HslU/HslV complex is dependent on binding of ATP.

It localises to the cytoplasm. Functionally, ATPase subunit of a proteasome-like degradation complex; this subunit has chaperone activity. The binding of ATP and its subsequent hydrolysis by HslU are essential for unfolding of protein substrates subsequently hydrolyzed by HslV. HslU recognizes the N-terminal part of its protein substrates and unfolds these before they are guided to HslV for hydrolysis. The polypeptide is ATP-dependent protease ATPase subunit HslU (Campylobacter jejuni subsp. jejuni serotype O:23/36 (strain 81-176)).